Consider the following 437-residue polypeptide: 3-ketoacyl-CoA thiolase (437 aa).

Cysteine 99 acts as the Acyl-thioester intermediate in catalysis. Residues histidine 392 and cysteine 422 each act as proton acceptor in the active site.

This sequence belongs to the thiolase-like superfamily. Thiolase family. As to quaternary structure, heterotetramer of two alpha chains (FadJ) and two beta chains (FadI).

Its subcellular location is the cytoplasm. The catalysed reaction is an acyl-CoA + acetyl-CoA = a 3-oxoacyl-CoA + CoA. Its pathway is lipid metabolism; fatty acid beta-oxidation. Its function is as follows. Catalyzes the final step of fatty acid oxidation in which acetyl-CoA is released and the CoA ester of a fatty acid two carbons shorter is formed. The polypeptide is 3-ketoacyl-CoA thiolase (Pectobacterium carotovorum subsp. carotovorum (strain PC1)).